A 217-amino-acid chain; its full sequence is T-complex protein 10A homolog 1 (217 aa).

A disordered region spans residues 1–26; that stretch reads MLAGQLEARDPKEGTHPEDPCPGAGA. Residues 7–19 are compositionally biased toward basic and acidic residues; the sequence is EARDPKEGTHPED. The stretch at 69 to 110 forms a coiled coil; it reads ADVHGKLRSHIDALREQNMELREKLRALQLQRWKARKKSAAS. Positions 75 to 96 are leucine-zipper; sequence LRSHIDALREQNMELREKLRAL. A compositionally biased stretch (basic and acidic residues) spans 175–192; it reads ERISSWKTPPQEKRDKSL. Residues 175–217 form a disordered region; sequence ERISSWKTPPQEKRDKSLSRRRQDRRATPTGRPTPCAERRGGV.

Belongs to the TCP10 family. In terms of assembly, self-associates (via leucine zipper). Interacts (via leucine zipper) with ZIPK/DAPK3 (via leucine zipper). Interacts with MAD4.

Its subcellular location is the nucleus. Its function is as follows. May be involved in transcriptional regulation. Has in vitro transcription inhibition activity. This chain is T-complex protein 10A homolog 1 (TCP10L), found in Pan troglodytes (Chimpanzee).